Consider the following 317-residue polypeptide: Methionyl-tRNA formyltransferase (317 aa).

Residue 112-115 (SILP) participates in (6S)-5,6,7,8-tetrahydrofolate binding.

It belongs to the Fmt family.

The enzyme catalyses L-methionyl-tRNA(fMet) + (6R)-10-formyltetrahydrofolate = N-formyl-L-methionyl-tRNA(fMet) + (6S)-5,6,7,8-tetrahydrofolate + H(+). Its function is as follows. Attaches a formyl group to the free amino group of methionyl-tRNA(fMet). The formyl group appears to play a dual role in the initiator identity of N-formylmethionyl-tRNA by promoting its recognition by IF2 and preventing the misappropriation of this tRNA by the elongation apparatus. The polypeptide is Methionyl-tRNA formyltransferase (Actinobacillus succinogenes (strain ATCC 55618 / DSM 22257 / CCUG 43843 / 130Z)).